A 593-amino-acid chain; its full sequence is ETS-related transcription factor Elf-2 (593 aa).

The interval 1 to 34 (MASAVVDSGGSALELPSDGGENQEGGDTGPDCPA) is disordered. Ser107 bears the Phosphoserine mark. The tract at residues 146-199 (VEVSTEESEPMDASPIPTSPDSHEPMKKKKVGRKPKTQQSPVSNGSPELGIKKK) is disordered. Residues 171 to 181 (MKKKKVGRKPK) are compositionally biased toward basic residues. At Thr182 the chain carries Phosphothreonine. Over residues 182–191 (TQQSPVSNGS) the composition is skewed to polar residues. Ser185 and Ser191 each carry phosphoserine. Residues 208–290 (TYLWEFLLDL…EGQRLVYQFK (83 aa)) constitute a DNA-binding region (ETS). Residues 362 to 383 (TSPTHDGSSRSPTTTAPVSAAA) are disordered. A phosphoserine mark is found at Ser363 and Ser372. Positions 370-383 (SRSPTTTAPVSAAA) are enriched in low complexity. At Thr376 the chain carries Phosphothreonine. A Phosphoserine modification is found at Ser432. Arg496 carries the omega-N-methylarginine modification. At Thr523 the chain carries Phosphothreonine. Lys538 is covalently cross-linked (Glycyl lysine isopeptide (Lys-Gly) (interchain with G-Cter in SUMO2)).

Belongs to the ETS family. Interacts with LIM domains of LMO2. Interacts via its N-terminal region with RUNX1. As to expression, expressed in all tissues examined. Highest levels in thymocytes and bone marrow.

The protein resides in the nucleus. Its function is as follows. Probably transcriptionally activates the LYN and BLK promoters and acts synergistically with RUNX1 to transactivate the BLK promoter. In Mus musculus (Mouse), this protein is ETS-related transcription factor Elf-2.